The following is a 258-amino-acid chain: Imidazole glycerol phosphate synthase subunit HisF (258 aa).

Active-site residues include D11 and D130.

The protein belongs to the HisA/HisF family. As to quaternary structure, heterodimer of HisH and HisF.

It localises to the cytoplasm. The enzyme catalyses 5-[(5-phospho-1-deoxy-D-ribulos-1-ylimino)methylamino]-1-(5-phospho-beta-D-ribosyl)imidazole-4-carboxamide + L-glutamine = D-erythro-1-(imidazol-4-yl)glycerol 3-phosphate + 5-amino-1-(5-phospho-beta-D-ribosyl)imidazole-4-carboxamide + L-glutamate + H(+). The protein operates within amino-acid biosynthesis; L-histidine biosynthesis; L-histidine from 5-phospho-alpha-D-ribose 1-diphosphate: step 5/9. Its function is as follows. IGPS catalyzes the conversion of PRFAR and glutamine to IGP, AICAR and glutamate. The HisF subunit catalyzes the cyclization activity that produces IGP and AICAR from PRFAR using the ammonia provided by the HisH subunit. This chain is Imidazole glycerol phosphate synthase subunit HisF, found in Nitrobacter winogradskyi (strain ATCC 25391 / DSM 10237 / CIP 104748 / NCIMB 11846 / Nb-255).